A 383-amino-acid polypeptide reads, in one-letter code: 8-amino-7-oxononanoate synthase (383 aa).

Arg21 lines the substrate pocket. 108-109 (GY) contacts pyridoxal 5'-phosphate. Residue His133 coordinates substrate. Pyridoxal 5'-phosphate is bound by residues Ser179, His207, and Thr233. Residue Lys236 is modified to N6-(pyridoxal phosphate)lysine. Thr350 lines the substrate pocket.

Belongs to the class-II pyridoxal-phosphate-dependent aminotransferase family. BioF subfamily. In terms of assembly, homodimer. Requires pyridoxal 5'-phosphate as cofactor.

The catalysed reaction is 6-carboxyhexanoyl-[ACP] + L-alanine + H(+) = (8S)-8-amino-7-oxononanoate + holo-[ACP] + CO2. The protein operates within cofactor biosynthesis; biotin biosynthesis. Its function is as follows. Catalyzes the decarboxylative condensation of pimeloyl-[acyl-carrier protein] and L-alanine to produce 8-amino-7-oxononanoate (AON), [acyl-carrier protein], and carbon dioxide. In Serratia proteamaculans (strain 568), this protein is 8-amino-7-oxononanoate synthase.